The primary structure comprises 210 residues: Putative O-methyltransferase MSMEG_5073/MSMEI_4947 (210 aa).

S-adenosyl-L-methionine is bound by residues Val37, Glu59, 61-62 (GT), Ser67, Asp85, and Val86. A substrate-binding site is contributed by Asp133. Position 135 (Asp135) interacts with S-adenosyl-L-methionine.

Belongs to the class I-like SAM-binding methyltransferase superfamily. Cation-dependent O-methyltransferase family.

This Mycolicibacterium smegmatis (strain ATCC 700084 / mc(2)155) (Mycobacterium smegmatis) protein is Putative O-methyltransferase MSMEG_5073/MSMEI_4947.